Consider the following 54-residue polypeptide: Ovomucoid (54 aa).

The 51-residue stretch at 4-54 (VNCSDYPKPVCSLLYMPLCGSDNKTYGNKCNFCNAVADSNGTLTLSHFGKC) folds into the Kazal-like domain. Cystine bridges form between Cys6–Cys36, Cys14–Cys33, and Cys22–Cys54. N-linked (GlcNAc...) asparagine glycosylation is present at Asn43.

It localises to the secreted. The polypeptide is Ovomucoid (Geococcyx californianus (Greater roadrunner)).